The chain runs to 251 residues: MSGHSKWATTKHKKAVIDARRGKMFARLIKNIEVAARVGGGDPVGNPTLYDAIQKAKKSSVPNGNIERARKRGAGEEVGGADWQVITYEGYAPNGVAVLIECLTDNRNRAAGEVRVAMTRNGGAMADPGSVAYLFSRKGVVTLEKNGLTEDDVLAAVLDAGAEEVNDLGDSFEVIAEPGDLVAVRTALQDAGIDYESAEASFQPSVSMPVDLDGARKVFKLVDALEDSDDVHNVWTNADVSDEVLAALDGE.

Belongs to the TACO1 family.

The protein localises to the cytoplasm. This is Probable transcriptional regulatory protein MLBr00475 from Mycobacterium leprae (strain Br4923).